The following is a 271-amino-acid chain: Small ribosomal subunit protein uS2 (271 aa).

The disordered stretch occupies residues 223–271 (RALAGSEEGEATEEVTPASEAEKQEVLAEAMSEEGDALQESEVVEEEEK). Acidic residues predominate over residues 253–271 (MSEEGDALQESEVVEEEEK).

This sequence belongs to the universal ribosomal protein uS2 family.

The polypeptide is Small ribosomal subunit protein uS2 (Wolinella succinogenes (strain ATCC 29543 / DSM 1740 / CCUG 13145 / JCM 31913 / LMG 7466 / NCTC 11488 / FDC 602W) (Vibrio succinogenes)).